A 148-amino-acid polypeptide reads, in one-letter code: Probable DNA-directed RNA polymerases I, II, and III subunit RPABC3 (148 aa).

Positions Asp16 to Ile40 are non-specific ssDNA binding.

This sequence belongs to the eukaryotic RPB8 RNA polymerase subunit family. As to quaternary structure, component of the RNA polymerase I (Pol I), RNA polymerase II (Pol II) and RNA polymerase III (Pol III) complexes consisting of at least 13, 12 and 17 subunits, respectively. Directly interacts with POLR2A.

Its subcellular location is the nucleus. DNA-dependent RNA polymerase catalyzes the transcription of DNA into RNA using the four ribonucleoside triphosphates as substrates. Common component of RNA polymerases I, II and III which synthesize ribosomal RNA precursors, mRNA precursors and many functional non-coding RNAs, and small RNAs, such as 5S rRNA and tRNAs, respectively. This Caenorhabditis elegans protein is Probable DNA-directed RNA polymerases I, II, and III subunit RPABC3 (rpb-8).